The sequence spans 258 residues: Capsid protein (258 aa).

Positions 3–20 (KRPGDIIISTPGSKVRRR) match the Bipartite nuclear localization signal motif. The short motif at 41–55 (RKRAWVNRPMYRKPT) is the Nuclear localization signal element. A zinc finger spans residues 69–86 (CEGPCKVQSFEQRDDVKH). The short motif at 102–123 (LTHRVGKRFCIKSIYILGKIWL) is the Nuclear export signal element. Positions 202–249 (KRFYRLNHHVTYNHQEAGKYENHTENALLLYMACTHASNPVYATLKIR) match the Bipartite nuclear localization signal motif.

This sequence belongs to the geminiviridae capsid protein family. As to quaternary structure, homomultimer. Binds to single-stranded and double-stranded viral DNA. Interacts (via nuclear localization signals) with host importin alpha-1a.

The protein localises to the virion. It is found in the host nucleus. Its function is as follows. Encapsidates the viral DNA into characteristic twinned ('geminate') particles. Binds the genomic viral ssDNA and shuttles it into and out of the cell nucleus. The CP of bipartite geminiviruses is not required for cell-to-cell or systemic movement. The sequence is that of Capsid protein from African cassava mosaic virus (isolate West Kenyan 844) (ACMV).